We begin with the raw amino-acid sequence, 186 residues long: Elongation factor P (186 aa).

It belongs to the elongation factor P family.

It localises to the cytoplasm. The protein operates within protein biosynthesis; polypeptide chain elongation. Functionally, involved in peptide bond synthesis. Stimulates efficient translation and peptide-bond synthesis on native or reconstituted 70S ribosomes in vitro. Probably functions indirectly by altering the affinity of the ribosome for aminoacyl-tRNA, thus increasing their reactivity as acceptors for peptidyl transferase. This Ruminiclostridium cellulolyticum (strain ATCC 35319 / DSM 5812 / JCM 6584 / H10) (Clostridium cellulolyticum) protein is Elongation factor P.